A 314-amino-acid polypeptide reads, in one-letter code: Taste receptor type 2 member 42 (314 aa).

Over methionine 1–lysine 7 the chain is Extracellular. A helical membrane pass occupies residues isoleucine 8–glycine 28. The Cytoplasmic portion of the chain corresponds to leucine 29–cysteine 50. Residues leucine 51–leucine 71 form a helical membrane-spanning segment. Residues alanine 72–threonine 101 lie on the Extracellular side of the membrane. Residues cysteine 102 to leucine 122 form a helical membrane-spanning segment. Over arginine 123–asparagine 127 the chain is Cytoplasmic. A helical membrane pass occupies residues arginine 128–leucine 148. The Extracellular portion of the chain corresponds to glutamate 149–leucine 187. N-linked (GlcNAc...) asparagine glycosylation occurs at asparagine 163. Residues asparagine 188–valine 208 traverse the membrane as a helical segment. Topologically, residues arginine 209–serine 238 are cytoplasmic. The helical transmembrane segment at phenylalanine 239–isoleucine 259 threads the bilayer. Over leucine 260–tyrosine 265 the chain is Extracellular. The chain crosses the membrane as a helical span at residues threonine 266–leucine 286. The Cytoplasmic segment spans residues glycine 287 to leucine 314.

This sequence belongs to the G-protein coupled receptor T2R family.

It localises to the membrane. In terms of biological role, receptor that may play a role in the perception of bitterness and is gustducin-linked. May play a role in sensing the chemical composition of the gastrointestinal content. The activity of this receptor may stimulate alpha gustducin, mediate PLC-beta-2 activation and lead to the gating of TRPM5. In Papio hamadryas (Hamadryas baboon), this protein is Taste receptor type 2 member 42 (TAS2R42).